The following is a 334-amino-acid chain: Beta-hexosaminidase (334 aa).

Substrate-binding positions include Asp62, Arg70, Arg130, and 160–161 (KH). The active-site Proton donor/acceptor is the His173. Catalysis depends on Asp243, which acts as the Nucleophile.

The protein belongs to the glycosyl hydrolase 3 family. NagZ subfamily.

Its subcellular location is the cytoplasm. The enzyme catalyses Hydrolysis of terminal non-reducing N-acetyl-D-hexosamine residues in N-acetyl-beta-D-hexosaminides.. It participates in cell wall biogenesis; peptidoglycan recycling. Its function is as follows. Plays a role in peptidoglycan recycling by cleaving the terminal beta-1,4-linked N-acetylglucosamine (GlcNAc) from peptide-linked peptidoglycan fragments, giving rise to free GlcNAc, anhydro-N-acetylmuramic acid and anhydro-N-acetylmuramic acid-linked peptides. The chain is Beta-hexosaminidase from Photobacterium profundum (strain SS9).